Consider the following 1054-residue polypeptide: Carbamoyl phosphate synthase large chain (1054 aa).

The carboxyphosphate synthetic domain stretch occupies residues 1 to 402 (MPRRDDIRSI…SLLKAMASLE (402 aa)). ATP is bound by residues arginine 129, arginine 169, glycine 175, glycine 176, arginine 208, valine 210, glutamate 215, glycine 241, valine 242, histidine 243, glutamine 285, and glutamate 299. Residues 133-328 (REAMERIGLR…IAKIAARLAV (196 aa)) form the ATP-grasp 1 domain. Mg(2+) contacts are provided by glutamine 285, glutamate 299, and asparagine 301. Glutamine 285, glutamate 299, and asparagine 301 together coordinate Mn(2+). The tract at residues 403–531 (IETRDIQARL…YYYSTYEQED (129 aa)) is oligomerization domain. Residues 532 to 914 (EVERGENPSV…AFAKALAAAG (383 aa)) are carbamoyl phosphate synthetic domain. The ATP-grasp 2 domain maps to 658 to 849 (GRLLRELGIP…LARLATRVLL (192 aa)). Residues arginine 694, lysine 733, glutamate 740, glycine 765, valine 766, histidine 767, serine 768, glutamine 808, and glutamate 820 each coordinate ATP. The Mg(2+) site is built by glutamine 808, glutamate 820, and asparagine 822. Mn(2+)-binding residues include glutamine 808, glutamate 820, and asparagine 822. The 140-residue stretch at 915 to 1054 (QRLPESGRVY…SLQDLYAART (140 aa)) folds into the MGS-like domain. Residues 915–1054 (QRLPESGRVY…SLQDLYAART (140 aa)) are allosteric domain.

Belongs to the CarB family. In terms of assembly, composed of two chains; the small (or glutamine) chain promotes the hydrolysis of glutamine to ammonia, which is used by the large (or ammonia) chain to synthesize carbamoyl phosphate. Tetramer of heterodimers (alpha,beta)4. It depends on Mg(2+) as a cofactor. Mn(2+) serves as cofactor.

The catalysed reaction is hydrogencarbonate + L-glutamine + 2 ATP + H2O = carbamoyl phosphate + L-glutamate + 2 ADP + phosphate + 2 H(+). It catalyses the reaction hydrogencarbonate + NH4(+) + 2 ATP = carbamoyl phosphate + 2 ADP + phosphate + 2 H(+). Its pathway is amino-acid biosynthesis; L-arginine biosynthesis; carbamoyl phosphate from bicarbonate: step 1/1. It participates in pyrimidine metabolism; UMP biosynthesis via de novo pathway; (S)-dihydroorotate from bicarbonate: step 1/3. Functionally, large subunit of the glutamine-dependent carbamoyl phosphate synthetase (CPSase). CPSase catalyzes the formation of carbamoyl phosphate from the ammonia moiety of glutamine, carbonate, and phosphate donated by ATP, constituting the first step of 2 biosynthetic pathways, one leading to arginine and/or urea and the other to pyrimidine nucleotides. The large subunit (synthetase) binds the substrates ammonia (free or transferred from glutamine from the small subunit), hydrogencarbonate and ATP and carries out an ATP-coupled ligase reaction, activating hydrogencarbonate by forming carboxy phosphate which reacts with ammonia to form carbamoyl phosphate. This is Carbamoyl phosphate synthase large chain from Rubrobacter xylanophilus (strain DSM 9941 / JCM 11954 / NBRC 16129 / PRD-1).